The sequence spans 494 residues: Cytochrome c-552 (494 aa).

The N-terminal stretch at Met1–Val31 is a signal peptide. Residue His116 participates in heme c binding. The heme site is built by Cys144, Cys147, and Lys148. Heme c contacts are provided by Cys182, Cys185, His186, Cys224, Cys227, and His228. Ca(2+) contacts are provided by Glu230, Tyr231, Lys276, and Gln278. Tyr231 contacts substrate. His279 serves as a coordination point for substrate. His290, Cys297, Cys300, His301, His315, Cys328, Cys331, His332, and His407 together coordinate heme c.

It belongs to the cytochrome c-552 family. The cofactor is Ca(2+). Heme c serves as cofactor.

Its subcellular location is the periplasm. It catalyses the reaction 6 Fe(III)-[cytochrome c] + NH4(+) + 2 H2O = 6 Fe(II)-[cytochrome c] + nitrite + 8 H(+). It participates in nitrogen metabolism; nitrate reduction (assimilation). Functionally, catalyzes the reduction of nitrite to ammonia, consuming six electrons in the process. This chain is Cytochrome c-552, found in Parabacteroides distasonis (strain ATCC 8503 / DSM 20701 / CIP 104284 / JCM 5825 / NCTC 11152).